Consider the following 377-residue polypeptide: Erythronate-4-phosphate dehydrogenase (377 aa).

Residues S45 and T67 each contribute to the substrate site. NAD(+) contacts are provided by residues 127–128 (QV), D147, and T176. Residue R209 is part of the active site. D233 is a binding site for NAD(+). The active site involves E238. H255 serves as the catalytic Proton donor. Position 258 (G258) interacts with NAD(+). Y259 contacts substrate.

Belongs to the D-isomer specific 2-hydroxyacid dehydrogenase family. PdxB subfamily. Homodimer.

Its subcellular location is the cytoplasm. It carries out the reaction 4-phospho-D-erythronate + NAD(+) = (R)-3-hydroxy-2-oxo-4-phosphooxybutanoate + NADH + H(+). It participates in cofactor biosynthesis; pyridoxine 5'-phosphate biosynthesis; pyridoxine 5'-phosphate from D-erythrose 4-phosphate: step 2/5. Its function is as follows. Catalyzes the oxidation of erythronate-4-phosphate to 3-hydroxy-2-oxo-4-phosphonooxybutanoate. The sequence is that of Erythronate-4-phosphate dehydrogenase from Vibrio atlanticus (strain LGP32) (Vibrio splendidus (strain Mel32)).